The sequence spans 107 residues: Ig kappa chain V region 4135 (107 aa).

A framework-1 region spans residues 1 to 24; sequence ADIVMTQTPASVSEPVGGTVTIKC. The segment at 25-35 is complementarity-determining-1; that stretch reads QTSQSIDDYLS. Residues 36–50 are framework-2; the sequence is WYQQKPGQPPKGLIY. The interval 51-57 is complementarity-determining-2; it reads RASTLAS. The segment at 58–89 is framework-3; that stretch reads GVPSRFRGSGSGTDFTLTISDLECADAATYYC. The segment at 90 to 96 is complementarity-determining-3; the sequence is QSTYGVG. The framework-4 stretch occupies residues 97–106; sequence FGGGTEVVVK.

In Oryctolagus cuniculus (Rabbit), this protein is Ig kappa chain V region 4135.